The primary structure comprises 328 residues: Carbonic anhydrase-related protein 11 (328 aa).

An N-terminal signal peptide occupies residues 1-23 (MGAAARLSAPRALVLWAALGAAA). One can recognise an Alpha-carbonic anhydrase domain in the interval 33-303 (DWWSYKDNLQ…LAHRALRGNR (271 aa)). N-linked (GlcNAc...) asparagine glycosylation is found at Asn118, Asn170, and Asn260. Residues 299-328 (LRGNRDPRHPERRCRGPNYRLHVDGAPHGR) are disordered. A compositionally biased stretch (basic and acidic residues) spans 319–328 (LHVDGAPHGR).

This sequence belongs to the alpha-carbonic anhydrase family.

The protein resides in the secreted. Does not have a catalytic activity. The chain is Carbonic anhydrase-related protein 11 (CA11) from Pongo abelii (Sumatran orangutan).